The following is a 527-amino-acid chain: Cytokinin dehydrogenase 6 (527 aa).

Positions Met1–Gly22 are cleaved as a signal peptide. The FAD-binding PCMH-type domain maps to Val55 to Ala236. FAD contacts are provided by Gly91 and Gly93. His94 is modified (pros-8alpha-FAD histidine). FAD is bound by residues Ser95 and Gln99. An N-linked (GlcNAc...) asparagine glycan is attached at Asn121. FAD contacts are provided by Asp160, Thr165, Ser171, Ile175, and Ile226. 2 N-linked (GlcNAc...) asparagine glycosylation sites follow: Asn280 and Asn323. The FAD site is built by Tyr475, Ser510, and Gln513.

It belongs to the oxygen-dependent FAD-linked oxidoreductase family. In terms of assembly, monomer. FAD is required as a cofactor.

Its subcellular location is the secreted. The protein localises to the extracellular space. The catalysed reaction is N(6)-dimethylallyladenine + A + H2O = 3-methyl-2-butenal + adenine + AH2. Catalyzes the oxidation of cytokinins, a family of N(6)-substituted adenine derivatives that are plant hormones, where the substituent is an isopentenyl group. The polypeptide is Cytokinin dehydrogenase 6 (CKX6) (Oryza sativa subsp. japonica (Rice)).